The primary structure comprises 447 residues: UDP-glycosyltransferase 79B10 (447 aa).

Residues S260, V319 to Q321, H336 to E344, and L358 to Q361 each bind UDP-alpha-D-glucose.

Belongs to the UDP-glycosyltransferase family.

This chain is UDP-glycosyltransferase 79B10 (UGT79B10), found in Arabidopsis thaliana (Mouse-ear cress).